Reading from the N-terminus, the 304-residue chain is Acetylxylan esterase A (304 aa).

The first 19 residues, 1–19 (MVKLQYLLSILLYAYSCTA), serve as a signal peptide directing secretion. The active-site Charge relay system is the serine 147. N-linked (GlcNAc...) asparagine glycosylation is present at asparagine 189.

It belongs to the carbohydrate esterase 1 (CE1) family. AxeA subfamily. In terms of assembly, monomer.

It is found in the secreted. The enzyme catalyses Deacetylation of xylans and xylo-oligosaccharides.. The protein operates within glycan degradation; xylan degradation. Its function is as follows. Acetylxylan esterase involved in the hydrolysis of xylan, a major structural heterogeneous polysaccharide found in plant biomass representing the second most abundant polysaccharide in the biosphere, after cellulose. Degrades acetylated xylans by cleaving acetyl side groups from the hetero-xylan backbone. In Emericella nidulans (strain FGSC A4 / ATCC 38163 / CBS 112.46 / NRRL 194 / M139) (Aspergillus nidulans), this protein is Acetylxylan esterase A (axeA).